The following is a 284-amino-acid chain: Putative xyloglucan endotransglucosylase/hydrolase protein 13 (284 aa).

An N-terminal signal peptide occupies residues 1–24 (MAAFTTKQSLLLLSLLLLISLSAG). Residues 25 to 214 (SFYDNFDITW…WTNAPFSASY (190 aa)) enclose the GH16 domain. E100 serves as the catalytic Nucleophile. The active-site Proton donor is E104. E104 provides a ligand contact to xyloglucan. N-linked (GlcNAc...) asparagine glycosylation occurs at N108. Residues 117 to 119 (HTN), 127 to 129 (NRE), 193 to 194 (DW), and G198 each bind xyloglucan. Intrachain disulfides connect C223-C234 and C267-C281. R272 is a binding site for xyloglucan.

This sequence belongs to the glycosyl hydrolase 16 family. XTH group 2 subfamily. Contains at least one intrachain disulfide bond essential for its enzymatic activity.

Its subcellular location is the secreted. It localises to the cell wall. It is found in the extracellular space. The protein localises to the apoplast. It carries out the reaction breaks a beta-(1-&gt;4) bond in the backbone of a xyloglucan and transfers the xyloglucanyl segment on to O-4 of the non-reducing terminal glucose residue of an acceptor, which can be a xyloglucan or an oligosaccharide of xyloglucan.. Its function is as follows. May catalyze xyloglucan endohydrolysis (XEH) and/or endotransglycosylation (XET). Cleaves and religates xyloglucan polymers, an essential constituent of the primary cell wall, and thereby participates in cell wall construction of growing tissues. The polypeptide is Putative xyloglucan endotransglucosylase/hydrolase protein 13 (XTH13) (Arabidopsis thaliana (Mouse-ear cress)).